A 728-amino-acid chain; its full sequence is Microtubule-associated protein VP5 (728 aa).

This sequence belongs to the reoviridae microtubule-associated protein family.

It localises to the virion. The protein localises to the host cytoplasm. It is found in the host cytoskeleton. Its function is as follows. Minor inner capsid component. Displays NTPase and RNA 5'-triphosphatase (RTPase) activities. May function as a cofactor of polymerase. Associates with microtubules and plays a role in the formation, structural organization and morphology of viral inclusions, where the assembly of cores and the replication of viral RNA occur. The sequence is that of Microtubule-associated protein VP5 (S5) from Aquareovirus C (isolate Golden shiner/USA/GSRV/1977) (AQRV-C).